A 570-amino-acid chain; its full sequence is 4-hydroxy-7-methoxy-3-oxo-3,4-dihydro-2H-1,4-benzoxazin-2-yl glucoside beta-D-glucosidase 1c, chloroplastic (570 aa).

The transit peptide at 1–50 directs the protein to the chloroplast; it reads MALLAAATLNPTTHLSIRSRAGHNSENLWLRSAASSQKSKGRFCNLTVRA. Residues Gln-92, His-194, and 239 to 240 contribute to the a beta-D-glucoside site; that span reads NE. Residue Glu-240 is the Proton donor of the active site. Cys-259 and Cys-265 are oxidised to a cystine. A beta-D-glucoside is bound by residues Tyr-383, Glu-456, Trp-504, 511–512, and Phe-520; that span reads EW. Glu-456 serves as the catalytic Nucleophile.

The protein belongs to the glycosyl hydrolase 1 family. In terms of assembly, homo- and heterohexamers. Expressed in young seedlings early after germination.

The protein resides in the plastid. It is found in the chloroplast. It catalyses the reaction Hydrolysis of terminal, non-reducing beta-D-glucosyl residues with release of beta-D-glucose.. The enzyme catalyses DIMBOA beta-D-glucoside + H2O = DIMBOA + D-glucose. The catalysed reaction is DIBOA beta-D-glucoside + H2O = DIBOA + D-glucose. In terms of biological role, acts in defense of young plant parts against pests via the production of hydroxamic acids from hydroxamic acid glucosides. Enzymatic activity is highly correlated with plant growth. The preferred substrate is DIMBOA-beta-D-glucoside. The sequence is that of 4-hydroxy-7-methoxy-3-oxo-3,4-dihydro-2H-1,4-benzoxazin-2-yl glucoside beta-D-glucosidase 1c, chloroplastic (GLU1C) from Triticum aestivum (Wheat).